The primary structure comprises 496 residues: GTPase Der (496 aa).

EngA-type G domains lie at 3–168 (PIIA…VPEK) and 210–383 (IKLA…DCST). Residues 9-16 (GRPNVGKS), 56-60 (DTGGI), 120-123 (NKID), 216-223 (GRPNVGKS), 263-267 (DTAGV), and 328-331 (NKWD) each bind GTP. The KH-like domain maps to 384–468 (KRINTSLLTR…PIRIQFKESE (85 aa)).

Belongs to the TRAFAC class TrmE-Era-EngA-EngB-Septin-like GTPase superfamily. EngA (Der) GTPase family. Associates with the 50S ribosomal subunit.

Its function is as follows. GTPase that plays an essential role in the late steps of ribosome biogenesis. The chain is GTPase Der from Hamiltonella defensa subsp. Acyrthosiphon pisum (strain 5AT).